We begin with the raw amino-acid sequence, 290 residues long: Ribonuclease 3 (290 aa).

An RNase III domain is found at 20-145 (YSCFYRILGF…FIGAIYLDRG (126 aa)). Glutamate 62 lines the Mg(2+) pocket. Aspartate 66 is an active-site residue. The Mg(2+) site is built by asparagine 131 and glutamate 134. Glutamate 134 is an active-site residue. A DRBM domain is found at 173-242 (NFKSKLIEWS…AQMTLKKIKG (70 aa)). A disordered region spans residues 254-290 (KTQNNVPAEDTTPESETSLTAENQQIDEIISTEEISV). Over residues 267 to 279 (ESETSLTAENQQI) the composition is skewed to polar residues.

The protein belongs to the ribonuclease III family. As to quaternary structure, homodimer. The cofactor is Mg(2+).

It localises to the cytoplasm. The enzyme catalyses Endonucleolytic cleavage to 5'-phosphomonoester.. Functionally, digests double-stranded RNA. Involved in the processing of primary rRNA transcript to yield the immediate precursors to the large and small rRNAs (23S and 16S). Processes some mRNAs, and tRNAs when they are encoded in the rRNA operon. Processes pre-crRNA and tracrRNA of type II CRISPR loci if present in the organism. This is Ribonuclease 3 from Bacteroides fragilis (strain ATCC 25285 / DSM 2151 / CCUG 4856 / JCM 11019 / LMG 10263 / NCTC 9343 / Onslow / VPI 2553 / EN-2).